Here is a 156-residue protein sequence, read N- to C-terminus: Small ribosomal subunit protein uS7 (156 aa).

It belongs to the universal ribosomal protein uS7 family. Part of the 30S ribosomal subunit. Contacts proteins S9 and S11.

In terms of biological role, one of the primary rRNA binding proteins, it binds directly to 16S rRNA where it nucleates assembly of the head domain of the 30S subunit. Is located at the subunit interface close to the decoding center, probably blocks exit of the E-site tRNA. The protein is Small ribosomal subunit protein uS7 of Bartonella tribocorum (strain CIP 105476 / IBS 506).